Consider the following 460-residue polypeptide: UDP-glycosyltransferase 91C1 (460 aa).

UDP-alpha-D-glucose-binding positions include T283, 335–337 (VPQ), 352–360 (HCGWNSVVE), and 374–377 (LNEQ).

This sequence belongs to the UDP-glycosyltransferase family.

This is UDP-glycosyltransferase 91C1 (UGT91C1) from Arabidopsis thaliana (Mouse-ear cress).